The sequence spans 30 residues: Dendrotoxin A (30 aa).

A disulfide bridge links Cys3 with Cys22.

This sequence belongs to the three-finger toxin family. Short-chain subfamily. Acn-esterase inhibitor sub-subfamily. In terms of processing, contains 4 disulfide bonds. Expressed by the venom gland.

Its subcellular location is the secreted. Functionally, inhibits acetylcholinesterase. Has been described to inhibit both the slowly and the rapidly inactivating phases of potassium efflux. The sequence is that of Dendrotoxin A from Dendroaspis angusticeps (Eastern green mamba).